The chain runs to 789 residues: Disintegrin and metalloproteinase domain-containing protein 1 (789 aa).

An N-terminal signal peptide occupies residues 1-68 (MSVAASASRS…LLIFLPSTLC (68 aa)). One can recognise a Peptidase M12B domain in the interval 238 to 432 (KYVEMFVVVN…HRGACLLDRP (195 aa)). Asn259 carries an N-linked (GlcNAc...) asparagine glycan. Cystine bridges form between Cys348–Cys427, Cys388–Cys411, Cys390–Cys396, and Cys497–Cys517. His373 lines the Zn(2+) pocket. Glu374 is a catalytic residue. Positions 377 and 383 each coordinate Zn(2+). An N-linked (GlcNAc...) asparagine glycan is attached at Asn410. Residues 441-525 (DAHCGNGVVE…ECPANSYMQD (85 aa)) form the Disintegrin domain. A glycan (N-linked (GlcNAc...) asparagine) is linked at Asn633. Positions 666 to 700 (LQYDCHPQEMCHGNGVCNNFKHCHCDAGFSPPDCS) constitute an EGF-like domain. 3 cysteine pairs are disulfide-bonded: Cys670–Cys682, Cys676–Cys688, and Cys690–Cys699. The N-linked (GlcNAc...) asparagine glycan is linked to Asn720. A helical transmembrane segment spans residues 743 to 763 (VVVLVVPIFLIVLLCCLMLIA). Over 764–789 (YLWSEVQEAVSPGSSSTTSSSESESD) the chain is Cytoplasmic.

In terms of assembly, heterodimer with ADAM2/fertilin subunit beta.

The protein resides in the membrane. Functionally, may be involved in sperm-egg fusion. The polypeptide is Disintegrin and metalloproteinase domain-containing protein 1 (Adam1) (Rattus norvegicus (Rat)).